A 346-amino-acid chain; its full sequence is Cell shape-determining protein MreC (346 aa).

Positions 89–118 (NRRLKAELAEMRQWRDRALALQDQNDRFKS) form a coiled coil. The tract at residues 292–346 (SLPPVTTEDPQTSILSNPVSRPVAPTPSPATATPSAAPAARPATTATPPQTGAPR) is disordered. The span at 299 to 308 (EDPQTSILSN) shows a compositional bias: polar residues. A compositionally biased stretch (low complexity) spans 309 to 340 (PVSRPVAPTPSPATATPSAAPAARPATTATPP).

This sequence belongs to the MreC family. In terms of assembly, interacts with penicillin-binding proteins (PBP2, PBP1a, PBP1b, PBP2a and PBP2b). Interacts with outer membrane proteins belonging to the TonB-dependent receptor family of transport proteins.

It is found in the periplasm. Its function is as follows. Involved in formation and maintenance of cell shape. Required for the spatial organization of components of the peptidoglycan-synthesizing holoenzyme in the periplasm and peptidoglycan synthetic activity. This Caulobacter vibrioides (strain NA1000 / CB15N) (Caulobacter crescentus) protein is Cell shape-determining protein MreC.